Here is a 233-residue protein sequence, read N- to C-terminus: 7-cyano-7-deazaguanine synthase (233 aa).

7 to 17 lines the ATP pocket; that stretch reads CSGGLDSVSLA. The Zn(2+) site is built by Cys185, Cys193, Cys196, and Cys199.

The protein belongs to the QueC family. Zn(2+) is required as a cofactor.

It carries out the reaction 7-carboxy-7-deazaguanine + NH4(+) + ATP = 7-cyano-7-deazaguanine + ADP + phosphate + H2O + H(+). It functions in the pathway purine metabolism; 7-cyano-7-deazaguanine biosynthesis. Its function is as follows. Catalyzes the ATP-dependent conversion of 7-carboxy-7-deazaguanine (CDG) to 7-cyano-7-deazaguanine (preQ(0)). The polypeptide is 7-cyano-7-deazaguanine synthase (Paracoccus denitrificans (strain Pd 1222)).